The primary structure comprises 58 residues: MAGPESDGQFQFTGIKKYFNSYTLTGRMNCVLATYGGIALLVLYFKLRPKKTPAVKAT.

N6-acetyllysine is present on residues lysine 16 and lysine 17. The chain crosses the membrane as a helical span at residues 23 to 45 (TLTGRMNCVLATYGGIALLVLYF).

Component of the ATP synthase complex composed at least of ATP5F1A/subunit alpha, ATP5F1B/subunit beta, ATP5MC1/subunit c (homooctomer), MT-ATP6/subunit a, MT-ATP8/subunit 8, ATP5ME/subunit e, ATP5MF/subunit f, ATP5MG/subunit g, ATP5MK/subunit k, ATP5MJ/subunit j, ATP5F1C/subunit gamma, ATP5F1D/subunit delta, ATP5F1E/subunit epsilon, ATP5PF/subunit F6, ATP5PB/subunit b, ATP5PD/subunit d, ATP5PO/subunit OSCP. ATP synthase complex consists of a soluble F(1) head domain (subunits alpha(3) and beta(3)) - the catalytic core - and a membrane F(0) domain - the membrane proton channel (subunits c, a, 8, e, f, g, k and j). These two domains are linked by a central stalk (subunits gamma, delta, and epsilon) rotating inside the F1 region and a stationary peripheral stalk (subunits F6, b, d, and OSCP). The ATP synthase complex/complex V exists as a monomeric and a dimeric supercomplex that helps shape mitochondrial cristae to optimize proton flow. Ubiquitous. Highly expressed in skeletal and cardiac muscle. Moderately expressed in brain, thymus, stomach and testis. Lowest expression levels were detected in lung, liver, kidney, adrenal gland, spleen, small intestine and adipose tissue. In streptozotocin-induced diabetes, the insulin-sensitive tissues skeletal and cardiac muscle were down-regulated.

Its subcellular location is the mitochondrion membrane. Subunit k, of the mitochondrial membrane ATP synthase complex (F(1)F(0) ATP synthase or Complex V) that produces ATP from ADP in the presence of a proton gradient across the membrane which is generated by electron transport complexes of the respiratory chain. ATP synthase complex consist of a soluble F(1) head domain - the catalytic core - and a membrane F(1) domain - the membrane proton channel. These two domains are linked by a central stalk rotating inside the F(1) region and a stationary peripheral stalk. During catalysis, ATP synthesis in the catalytic domain of F(1) is coupled via a rotary mechanism of the central stalk subunits to proton translocation. In vivo, can only synthesize ATP although its ATP hydrolase activity can be activated artificially in vitro. Part of the complex F(0) domain. Required for dimerization of the ATP synthase complex and as such regulates ATP synthesis in the mitochondria. The protein is ATP synthase F(0) complex subunit k, mitochondrial (Atp5mk) of Rattus norvegicus (Rat).